The chain runs to 658 residues: Gametogenetin (658 aa).

Disordered regions lie at residues 1–268 (MGNV…ASGG) and 285–584 (KQGP…SNKG). Over residues 14 to 30 (SRKEQASDRASDSRRTP) the composition is skewed to basic and acidic residues. The span at 54-83 (PGSSGPPGLLIPPESQASSSTLPLTLELPS) shows a compositional bias: low complexity. An interaction with GGNBP1 region spans residues 127 to 491 (RGLLEASHRG…APTPPSTLSP (365 aa)). A compositionally biased stretch (pro residues) spans 163-188 (PAPPPTPLEPRKQLPPAPSTCDPQPP). The segment covering 194-204 (LASSATSPTES) has biased composition (polar residues). A compositionally biased stretch (low complexity) spans 252–264 (SSSGPLAAKASLG). At serine 384 the chain carries Phosphoserine. Low complexity predominate over residues 398–409 (PRRPTPALLAPP). Pro residues predominate over residues 423–460 (RPVPPSPQQIPPLPPPPPTPPATPPPAPPPTPQPPALP). The segment covering 489–516 (LSPTAAAEQAPAPTPAPVTSQVPATTTA) has biased composition (low complexity). The interval 496–658 (EQAPAPTPAP…HYDLQATHST (163 aa)) is interactions with ZNF403/GGNBP2 and OAZ3. Over residues 527-536 (IRTRRNKGPR) the composition is skewed to basic residues.

In terms of assembly, interacts with FANCL, GGNBP1 and ZNF403/GGNBP2.

May be involved in spermatogenesis. This Rattus norvegicus (Rat) protein is Gametogenetin (Ggn).